Here is a 327-residue protein sequence, read N- to C-terminus: Protein hunchback (327 aa).

C2H2-type zinc fingers lie at residues 1–5, 11–33, and 39–63; these read HMRNH, FQCSQCSYSCVNKSMLNSHLKSH, and YRCADCNYATKYCHSLKLHLRKYQH. Disordered regions lie at residues 91–121, 143–170, and 182–290; these read KQKPFSKMFEPQGPVSNNNQPQPPAPTHPIF, PPNNNYEQRTSPKNHEIQTEKPQQMSPP, and ERPL…EVAS. Basic and acidic residues-rich tracts occupy residues 205-216 and 265-276; these read THREMPTEHGDD and LQHEDEKMRDAD. 2 consecutive C2H2-type zinc fingers follow at residues 297–319 and 325–327; these read YTCQFCDITFGDLTMHTIHMGFH and FMC.

The protein belongs to the hunchback C2H2-type zinc-finger protein family.

It is found in the nucleus. In terms of biological role, gap class segmentation protein that controls development of head structures. In Manduca sexta (Tobacco hawkmoth), this protein is Protein hunchback (hb).